The primary structure comprises 32 residues: Jingzhaotoxin F4-32.60 (32 aa).

Intrachain disulfides connect Cys2–Cys17, Cys9–Cys22, and Cys16–Cys29. The residue at position 31 (Asp31) is an Aspartic acid 1-amide.

Belongs to the neurotoxin 10 (Hwtx-1) family. 30 (Jztx-14) subfamily. Amidated as well as non-amidated forms are found in the venom. Expressed by the venom gland.

It is found in the secreted. Functionally, probable ion channel inhibitor. The sequence is that of Jingzhaotoxin F4-32.60 from Chilobrachys guangxiensis (Chinese earth tiger tarantula).